The chain runs to 116 residues: Ribosome-binding factor A (116 aa).

This sequence belongs to the RbfA family. Monomer. Binds 30S ribosomal subunits, but not 50S ribosomal subunits or 70S ribosomes.

Its subcellular location is the cytoplasm. In terms of biological role, one of several proteins that assist in the late maturation steps of the functional core of the 30S ribosomal subunit. Associates with free 30S ribosomal subunits (but not with 30S subunits that are part of 70S ribosomes or polysomes). Required for efficient processing of 16S rRNA. May interact with the 5'-terminal helix region of 16S rRNA. This is Ribosome-binding factor A from Streptococcus equi subsp. zooepidemicus (strain H70).